Consider the following 488-residue polypeptide: (S)-N-methylcoclaurine 3'-hydroxylase isozyme 2 (488 aa).

A helical membrane pass occupies residues 3–23; the sequence is VVTVALIAVIISSILYLLFGS. C430 contributes to the heme binding site.

It belongs to the cytochrome P450 family. Requires heme as cofactor.

The protein localises to the endoplasmic reticulum membrane. It is found in the microsome membrane. The enzyme catalyses (S)-N-methylcoclaurine + reduced [NADPH--hemoprotein reductase] + O2 = (S)-3'-hydroxy-N-methylcoclaurine + oxidized [NADPH--hemoprotein reductase] + H2O + H(+). The protein operates within alkaloid biosynthesis; (S)-reticuline biosynthesis; (S)-reticuline from (S)-norcoclaurine: step 3/4. In terms of biological role, 3'-hydroxylation of (S)-N-methylcoclaurine. The chain is (S)-N-methylcoclaurine 3'-hydroxylase isozyme 2 (CYP80B2) from Eschscholzia californica (California poppy).